The sequence spans 256 residues: Ciliary microtubule associated protein 1A (256 aa).

STPGR repeat units lie at residues 66-92, 181-206, and 217-242; these read PGPG…IYGR, PGPG…MTAR, and PGPG…FGIR. The segment at 91–115 is disordered; the sequence is GRPRDISSFRTPGPGSYSPERAGKS.

The protein belongs to the CIMAP family.

Its subcellular location is the cytoplasm. The protein localises to the cytoskeleton. The protein resides in the flagellum axoneme. Functionally, outer dense fibers are filamentous structures located on the outside of the axoneme in the midpiece and principal piece of the mammalian sperm tail. May help to maintain the passive elastic structures and elastic recoil of the sperm tail. In Xenopus laevis (African clawed frog), this protein is Ciliary microtubule associated protein 1A (cimap1a).